We begin with the raw amino-acid sequence, 406 residues long: Serine/threonine transporter SstT (406 aa).

9 helical membrane-spanning segments follow: residues 15–35 (LVLQ…VSPS), 47–67 (FVGA…AASI), 81–101 (IIAM…VLSF), 140–160 (ALMS…GLAL), 191–211 (FGIF…ALAG), 215–235 (LLVV…PAMV), 289–309 (IPLG…TLTL), 315–335 (MGIE…AVSA), and 362–382 (IAMQ…SAET).

It belongs to the dicarboxylate/amino acid:cation symporter (DAACS) (TC 2.A.23) family.

It localises to the cell inner membrane. It carries out the reaction L-serine(in) + Na(+)(in) = L-serine(out) + Na(+)(out). It catalyses the reaction L-threonine(in) + Na(+)(in) = L-threonine(out) + Na(+)(out). Involved in the import of serine and threonine into the cell, with the concomitant import of sodium (symport system). This Vibrio vulnificus (strain CMCP6) protein is Serine/threonine transporter SstT.